The chain runs to 280 residues: Large ribosomal subunit protein uL2 (280 aa).

Disordered stretches follow at residues 29 to 58 and 225 to 280; these read PEKS…GGGH and VMNP…NKKR. Positions 45–58 are enriched in basic residues; sequence SHGHITTRHRGGGH. Over residues 253 to 269 the composition is skewed to basic and acidic residues; that stretch reads KEGRTRKPKRYSDDMIV. Basic residues predominate over residues 270–280; sequence RRRRANKNKKR.

Belongs to the universal ribosomal protein uL2 family. Part of the 50S ribosomal subunit. Forms a bridge to the 30S subunit in the 70S ribosome.

One of the primary rRNA binding proteins. Required for association of the 30S and 50S subunits to form the 70S ribosome, for tRNA binding and peptide bond formation. It has been suggested to have peptidyltransferase activity; this is somewhat controversial. Makes several contacts with the 16S rRNA in the 70S ribosome. In Corynebacterium glutamicum (strain R), this protein is Large ribosomal subunit protein uL2.